A 24-amino-acid polypeptide reads, in one-letter code: Unknown protein NF004 from 2D-PAGE (24 aa).

In Naegleria fowleri (Brain eating amoeba), this protein is Unknown protein NF004 from 2D-PAGE.